Reading from the N-terminus, the 197-residue chain is C-type lectin domain family 3 member A (197 aa).

The first 22 residues, 1-22 (MAKNGLVICILVITLLLDQTTS), serve as a signal peptide directing secretion. Cystine bridges form between cysteine 68-cysteine 78, cysteine 95-cysteine 191, and cysteine 167-cysteine 183. The C-type lectin domain occupies 74-192 (VHKKCYLASE…CRSSKRYICE (119 aa)).

In terms of tissue distribution, restricted to cartilage and breast. Also expressed in breast cancers.

It localises to the secreted. In terms of biological role, promotes cell adhesion to laminin-332 and fibronectin. This chain is C-type lectin domain family 3 member A (CLEC3A), found in Homo sapiens (Human).